The primary structure comprises 376 residues: Succinyl-diaminopimelate desuccinylase (376 aa).

H67 serves as a coordination point for Zn(2+). Residue D69 is part of the active site. D100 is a binding site for Zn(2+). E134 (proton acceptor) is an active-site residue. Zn(2+)-binding residues include E135, E163, and H349.

The protein belongs to the peptidase M20A family. DapE subfamily. In terms of assembly, homodimer. Zn(2+) is required as a cofactor. The cofactor is Co(2+).

The enzyme catalyses N-succinyl-(2S,6S)-2,6-diaminopimelate + H2O = (2S,6S)-2,6-diaminopimelate + succinate. It participates in amino-acid biosynthesis; L-lysine biosynthesis via DAP pathway; LL-2,6-diaminopimelate from (S)-tetrahydrodipicolinate (succinylase route): step 3/3. In terms of biological role, catalyzes the hydrolysis of N-succinyl-L,L-diaminopimelic acid (SDAP), forming succinate and LL-2,6-diaminopimelate (DAP), an intermediate involved in the bacterial biosynthesis of lysine and meso-diaminopimelic acid, an essential component of bacterial cell walls. This is Succinyl-diaminopimelate desuccinylase from Pseudoalteromonas translucida (strain TAC 125).